Reading from the N-terminus, the 366-residue chain is Class I histocompatibility antigen, Gogo-C*0203 alpha chain (366 aa).

A signal peptide spans 1–24 (MRVMAPRTLILLLSGALALTETWA). The alpha-1 stretch occupies residues 25–114 (GSHSMRYFYT…LRGYYNQSED (90 aa)). Residues 25–308 (GSHSMRYFYT…EPSSQPTIPI (284 aa)) lie on the Extracellular side of the membrane. Asn110 carries N-linked (GlcNAc...) asparagine glycosylation. Positions 115–206 (GSHTLQSMYG…ENGKETLQRA (92 aa)) are alpha-2. Disulfide bonds link Cys125/Cys188 and Cys227/Cys283. Residues 207 to 298 (EPPKTHVTHH…GLPEPLTLRW (92 aa)) are alpha-3. In terms of domain architecture, Ig-like C1-type spans 209-297 (PKTHVTHHPL…EGLPEPLTLR (89 aa)). Positions 299 to 308 (EPSSQPTIPI) are connecting peptide. Residues 309-332 (VGIVVGLAVLVVLAVLGAVVTAMM) form a helical membrane-spanning segment. At 333–366 (CRRKSSGGKGGSCSQAACSNSAQGSDESLITCKA) the chain is on the cytoplasmic side.

This sequence belongs to the MHC class I family. Heterodimer of an alpha chain and a beta chain (beta-2-microglobulin).

The protein resides in the membrane. In terms of biological role, involved in the presentation of foreign antigens to the immune system. This Gorilla gorilla gorilla (Western lowland gorilla) protein is Class I histocompatibility antigen, Gogo-C*0203 alpha chain.